Consider the following 245-residue polypeptide: 2,3,4,5-tetrahydropyridine-2,6-dicarboxylate N-acetyltransferase (245 aa).

Belongs to the transferase hexapeptide repeat family. DapH subfamily.

The catalysed reaction is (S)-2,3,4,5-tetrahydrodipicolinate + acetyl-CoA + H2O = L-2-acetamido-6-oxoheptanedioate + CoA. It functions in the pathway amino-acid biosynthesis; L-lysine biosynthesis via DAP pathway; LL-2,6-diaminopimelate from (S)-tetrahydrodipicolinate (acetylase route): step 1/3. Functionally, catalyzes the transfer of an acetyl group from acetyl-CoA to tetrahydrodipicolinate. This is 2,3,4,5-tetrahydropyridine-2,6-dicarboxylate N-acetyltransferase from Methanopyrus kandleri (strain AV19 / DSM 6324 / JCM 9639 / NBRC 100938).